A 675-amino-acid polypeptide reads, in one-letter code: Zinc finger protein 526 (675 aa).

3 C2H2-type zinc fingers span residues 56–78 (FMCS…QEQH), 108–130 (FQCG…QDAH), and 140–163 (YQCG…KTQH). The interval 160 to 195 (KTQHLSSAADEPPSPLPPPTPPPPPPPPPPPPPPEV) is disordered. Residues 171-194 (PPSPLPPPTPPPPPPPPPPPPPPE) show a composition bias toward pro residues. A C2H2-type 4 zinc finger spans residues 200–222 (YECPECSTLCATPEEFLEHQGTH). A compositionally biased stretch (basic and acidic residues) spans 225-234 (SLEKEEHNGL). The disordered stretch occupies residues 225-283 (SLEKEEHNGLEEEEEDEEEGEEEEDDDDEETDEEEASSELTADDTGSNKSTADSAQSCG). Over residues 235 to 261 (EEEEEDEEEGEEEEDDDDEETDEEEAS) the composition is skewed to acidic residues. Over residues 269-281 (TGSNKSTADSAQS) the composition is skewed to polar residues. C2H2-type zinc fingers lie at residues 312 to 334 (FHCS…GRAH), 339 to 361 (HECT…QRLH), 367 to 389 (YLCV…RRAH), and 395 to 416 (HRCR…RRTH). The segment at 415 to 439 (THTGKSGTPTRVATVSPAPAEPTPP) is disordered. The segment covering 418-427 (GKSGTPTRVA) has biased composition (polar residues). 5 consecutive C2H2-type zinc fingers follow at residues 447–470 (LPCP…RAVH), 477–499 (HRCG…LRTH), 505–527 (FQCH…QLTH), 533–555 (YQCL…RRLH), and 578–600 (YYCG…QRVH). The disordered stretch occupies residues 606-625 (LTLQPPRSPSPVPPPPPEPQ). Residues 611 to 624 (PRSPSPVPPPPPEP) are compositionally biased toward pro residues.

Belongs to the krueppel C2H2-type zinc-finger protein family.

The protein resides in the nucleus. In terms of biological role, may be involved in transcriptional regulation. This Mus musculus (Mouse) protein is Zinc finger protein 526 (Znf526).